Here is a 169-residue protein sequence, read N- to C-terminus: Ubiquitin-fold modifier-conjugating enzyme 1 (169 aa).

Cys116 functions as the Glycyl thioester intermediate in the catalytic mechanism.

Belongs to the ubiquitin-conjugating enzyme family. UFC1 subfamily.

Functionally, E2-like enzyme which forms an intermediate with UFM1 via a thioester linkage. This chain is Ubiquitin-fold modifier-conjugating enzyme 1, found in Nematostella vectensis (Starlet sea anemone).